Here is a 495-residue protein sequence, read N- to C-terminus: AAA-ATPase At2g18193 (495 aa).

A helical transmembrane segment spans residues 7–28 (FSFSPSSLFSAYASLTGFLMLF). Position 250–257 (250–257 (GPPGTGKS)) interacts with ATP. Positions 451 to 495 (EVSICKATDDDEKQNGSLGCVKKKKKGGKQKGKGKGKGKAKTYLI) are disordered. A compositionally biased stretch (basic residues) spans 471–495 (VKKKKKGGKQKGKGKGKGKAKTYLI).

It belongs to the AAA ATPase family. BCS1 subfamily. Requires Mg(2+) as cofactor.

The protein localises to the membrane. It catalyses the reaction ATP + H2O = ADP + phosphate + H(+). This chain is AAA-ATPase At2g18193, found in Arabidopsis thaliana (Mouse-ear cress).